The chain runs to 80 residues: Sec-independent protein translocase protein TatA (80 aa).

A helical membrane pass occupies residues 1–21; the sequence is MGISMWQLLIVLLIIVLLFGT. The tract at residues 39-80 is disordered; the sequence is KKAMSDGESEEDKEPKKLSQNESRTIEGSVERNDAKTESKHS. The span at 67–80 shows a compositional bias: basic and acidic residues; the sequence is SVERNDAKTESKHS.

It belongs to the TatA/E family. The Tat system comprises two distinct complexes: a TatABC complex, containing multiple copies of TatA, TatB and TatC subunits, and a separate TatA complex, containing only TatA subunits. Substrates initially bind to the TatABC complex, which probably triggers association of the separate TatA complex to form the active translocon.

Its subcellular location is the cell inner membrane. In terms of biological role, part of the twin-arginine translocation (Tat) system that transports large folded proteins containing a characteristic twin-arginine motif in their signal peptide across membranes. TatA could form the protein-conducting channel of the Tat system. The chain is Sec-independent protein translocase protein TatA from Hahella chejuensis (strain KCTC 2396).